We begin with the raw amino-acid sequence, 102 residues long: Iron-sulfur cluster assembly protein CyaY (102 aa).

It belongs to the frataxin family.

Functionally, involved in iron-sulfur (Fe-S) cluster assembly. May act as a regulator of Fe-S biogenesis. The sequence is that of Iron-sulfur cluster assembly protein CyaY from Pasteurella multocida (strain Pm70).